Here is a 100-residue protein sequence, read N- to C-terminus: Small ribosomal subunit protein bS6 (100 aa).

This sequence belongs to the bacterial ribosomal protein bS6 family.

In terms of biological role, binds together with bS18 to 16S ribosomal RNA. This is Small ribosomal subunit protein bS6 from Tropheryma whipplei (strain Twist) (Whipple's bacillus).